A 385-amino-acid chain; its full sequence is ATP synthase subunit a-1 (385 aa).

A propeptide spanning residues 1-133 (MRRIFLFDEN…ALNIVGQAAA (133 aa)) is cleaved from the precursor. 7 helical membrane-spanning segments follow: residues 154-174 (FSFT…LLLI), 220-240 (FFPC…QGMI), 249-269 (HFLI…IVGF), 276-296 (FFSF…LVLL), 316-336 (MMAG…MLCM), 339-359 (IFYF…TGLE), and 362-382 (VAIL…NDAI).

The protein belongs to the ATPase A chain family. F-type ATPases have 2 components, CF(1) - the catalytic core - and CF(0) - the membrane proton channel. CF(1) has five subunits: alpha(3), beta(3), gamma(1), delta(1), epsilon(1). CF(0) has three main subunits: a, b and c.

The protein localises to the mitochondrion inner membrane. Mitochondrial membrane ATP synthase (F(1)F(0) ATP synthase or Complex V) produces ATP from ADP in the presence of a proton gradient across the membrane which is generated by electron transport complexes of the respiratory chain. F-type ATPases consist of two structural domains, F(1) - containing the extramembraneous catalytic core and F(0) - containing the membrane proton channel, linked together by a central stalk and a peripheral stalk. During catalysis, ATP synthesis in the catalytic domain of F(1) is coupled via a rotary mechanism of the central stalk subunits to proton translocation. Key component of the proton channel; it may play a direct role in the translocation of protons across the membrane. The sequence is that of ATP synthase subunit a-1 (ATP6-1) from Arabidopsis thaliana (Mouse-ear cress).